Reading from the N-terminus, the 182-residue chain is uncharacterized protein (182 aa).

Its subcellular location is the mitochondrion. This is an uncharacterized protein from Schizosaccharomyces pombe (strain 972 / ATCC 24843) (Fission yeast).